Here is a 226-residue protein sequence, read N- to C-terminus: MPDICDSNKLNHRFRGYYPVVIDVETAGFNANTDALLEIAVTLLKMNDDGILVLDKTVHFHIEPFEGANLEPEALAFNGIDPTNPLRGAVSEKEAFLEIFKTVKKGQKASDCHRSIIVAHNAAFDLSFVNKAIERNDLKRSPFHPFASFDTATLAGLSIGHTVLAKACKMAGIDFDNKEAHSALYDTERTAELFCHIVNRWKALGGWPLATPEQSAIENTDEKIES.

The Exonuclease domain maps to 20-194; the sequence is VVIDVETAGF…YDTERTAELF (175 aa). Residues Asp-23, Glu-25, His-181, and Asp-186 each contribute to the Mg(2+) site. The active-site Proton donor/acceptor is His-181.

This sequence belongs to the RNase T family. Homodimer. The cofactor is Mg(2+).

Functionally, trims short 3' overhangs of a variety of RNA species, leaving a one or two nucleotide 3' overhang. Responsible for the end-turnover of tRNA: specifically removes the terminal AMP residue from uncharged tRNA (tRNA-C-C-A). Also appears to be involved in tRNA biosynthesis. The polypeptide is Ribonuclease T (Shewanella denitrificans (strain OS217 / ATCC BAA-1090 / DSM 15013)).